We begin with the raw amino-acid sequence, 238 residues long: MATPHINAEMGDFADVVLMPGDPLRAKYIAETFLENVRQVNDVRGMLGFTGTYKGRPISVMGHGMGIPSCSIYAKELITDFGAKVLIRVGSCGSVRHDVKLRDVVIGMGACTDSKVNRIRFKDHDFAAIADFDLVRNAVDAAKAKNINVRVGNIFSVELFYTPDPQLFDIMEKYGILGVEMEAAGFYGVAAEYGAKALTICTVSDHIRTHEKLTAEERQTTFNEMIEIALESVLLGDK.

Residue His5 participates in a purine D-ribonucleoside binding. Residues Gly21, Arg25, Arg44, and Arg88 to Ser91 each bind phosphate. A purine D-ribonucleoside-binding positions include Glu180–Glu182 and Ser204–Asp205. Asp205 (proton donor) is an active-site residue.

It belongs to the PNP/UDP phosphorylase family. As to quaternary structure, homohexamer; trimer of homodimers.

It catalyses the reaction a purine D-ribonucleoside + phosphate = a purine nucleobase + alpha-D-ribose 1-phosphate. The enzyme catalyses a purine 2'-deoxy-D-ribonucleoside + phosphate = a purine nucleobase + 2-deoxy-alpha-D-ribose 1-phosphate. Catalyzes the reversible phosphorolytic breakdown of the N-glycosidic bond in the beta-(deoxy)ribonucleoside molecules, with the formation of the corresponding free purine bases and pentose-1-phosphate. The polypeptide is Purine nucleoside phosphorylase DeoD-type (Photorhabdus laumondii subsp. laumondii (strain DSM 15139 / CIP 105565 / TT01) (Photorhabdus luminescens subsp. laumondii)).